Consider the following 530-residue polypeptide: Bifunctional purine biosynthesis protein PurH (530 aa).

The 148-residue stretch at 1–148 (MNNARPIRRA…KNHKDVTIVV (148 aa)) folds into the MGS-like domain.

This sequence belongs to the PurH family.

It carries out the reaction (6R)-10-formyltetrahydrofolate + 5-amino-1-(5-phospho-beta-D-ribosyl)imidazole-4-carboxamide = 5-formamido-1-(5-phospho-D-ribosyl)imidazole-4-carboxamide + (6S)-5,6,7,8-tetrahydrofolate. It catalyses the reaction IMP + H2O = 5-formamido-1-(5-phospho-D-ribosyl)imidazole-4-carboxamide. Its pathway is purine metabolism; IMP biosynthesis via de novo pathway; 5-formamido-1-(5-phospho-D-ribosyl)imidazole-4-carboxamide from 5-amino-1-(5-phospho-D-ribosyl)imidazole-4-carboxamide (10-formyl THF route): step 1/1. It functions in the pathway purine metabolism; IMP biosynthesis via de novo pathway; IMP from 5-formamido-1-(5-phospho-D-ribosyl)imidazole-4-carboxamide: step 1/1. This is Bifunctional purine biosynthesis protein PurH from Aliivibrio fischeri (strain ATCC 700601 / ES114) (Vibrio fischeri).